Here is a 432-residue protein sequence, read N- to C-terminus: Adenylosuccinate synthetase (432 aa).

GTP contacts are provided by residues 12 to 18 (GDEGKGK) and 40 to 42 (GHT). Aspartate 13 functions as the Proton acceptor in the catalytic mechanism. 2 residues coordinate Mg(2+): aspartate 13 and glycine 40. IMP-binding positions include 13–16 (DEGK), 38–41 (NAGH), threonine 132, arginine 146, glutamine 226, threonine 241, and arginine 305. The active-site Proton donor is histidine 41. Residue 301 to 307 (TVTGRKR) coordinates substrate. GTP-binding positions include arginine 307, 333–335 (KLD), and 415–417 (STS).

The protein belongs to the adenylosuccinate synthetase family. Homodimer. Requires Mg(2+) as cofactor.

The protein localises to the cytoplasm. It catalyses the reaction IMP + L-aspartate + GTP = N(6)-(1,2-dicarboxyethyl)-AMP + GDP + phosphate + 2 H(+). It participates in purine metabolism; AMP biosynthesis via de novo pathway; AMP from IMP: step 1/2. Functionally, plays an important role in the de novo pathway of purine nucleotide biosynthesis. Catalyzes the first committed step in the biosynthesis of AMP from IMP. The protein is Adenylosuccinate synthetase of Allorhizobium ampelinum (strain ATCC BAA-846 / DSM 112012 / S4) (Agrobacterium vitis (strain S4)).